We begin with the raw amino-acid sequence, 131 residues long: Small ribosomal subunit protein uS11 (131 aa).

It belongs to the universal ribosomal protein uS11 family. In terms of assembly, part of the 30S ribosomal subunit. Interacts with proteins S7 and S18. Binds to IF-3.

Located on the platform of the 30S subunit, it bridges several disparate RNA helices of the 16S rRNA. Forms part of the Shine-Dalgarno cleft in the 70S ribosome. The chain is Small ribosomal subunit protein uS11 from Wigglesworthia glossinidia brevipalpis.